Here is a 328-residue protein sequence, read N- to C-terminus: Glycerol-3-phosphate dehydrogenase [NAD(P)+] (328 aa).

NADPH is bound by residues Trp15, Arg35, Arg36, and Lys105. Residues Lys105 and Gly131 each coordinate sn-glycerol 3-phosphate. Ala135 contacts NADPH. Residues Lys186, Asp239, Ser249, Arg250, and Asn251 each coordinate sn-glycerol 3-phosphate. The Proton acceptor role is filled by Lys186. Residue Arg250 participates in NADPH binding. NADPH is bound by residues Val270 and Glu272.

Belongs to the NAD-dependent glycerol-3-phosphate dehydrogenase family.

The protein localises to the cytoplasm. It catalyses the reaction sn-glycerol 3-phosphate + NAD(+) = dihydroxyacetone phosphate + NADH + H(+). The enzyme catalyses sn-glycerol 3-phosphate + NADP(+) = dihydroxyacetone phosphate + NADPH + H(+). It participates in membrane lipid metabolism; glycerophospholipid metabolism. In terms of biological role, catalyzes the reduction of the glycolytic intermediate dihydroxyacetone phosphate (DHAP) to sn-glycerol 3-phosphate (G3P), the key precursor for phospholipid synthesis. This chain is Glycerol-3-phosphate dehydrogenase [NAD(P)+], found in Deinococcus radiodurans (strain ATCC 13939 / DSM 20539 / JCM 16871 / CCUG 27074 / LMG 4051 / NBRC 15346 / NCIMB 9279 / VKM B-1422 / R1).